The chain runs to 563 residues: Arylsulfatase K (563 aa).

Positions 1 to 17 are cleaved as a signal peptide; the sequence is MLLLLVSVIVALALVAP. Ca(2+) contacts are provided by Asp40 and Cys80. Residue Cys80 is the Nucleophile of the active site. Residue Cys80 is modified to 3-oxoalanine (Cys). Asn108 carries an N-linked (GlcNAc...) asparagine glycan. A substrate-binding site is contributed by Lys128. Asn191 carries N-linked (GlcNAc...) asparagine glycosylation. His249 contributes to the substrate binding site. An N-linked (GlcNAc...) asparagine glycan is attached at Asn260. Asp311 and His312 together coordinate Ca(2+). Residues Asn373, Asn411, and Asn496 are each glycosylated (N-linked (GlcNAc...) asparagine).

It belongs to the sulfatase family. It depends on Ca(2+) as a cofactor. Post-translationally, the conversion to 3-oxoalanine (also known as C-formylglycine, FGly), of a serine or cysteine residue in prokaryotes and of a cysteine residue in eukaryotes, is critical for catalytic activity. In terms of processing, the 75-kDa precursor undergoes proteolytic processing to yield a 23 kDa form. N-glycosylated with both high mannose and complex type sugars.

The protein localises to the secreted. It localises to the lysosome. It catalyses the reaction an aryl sulfate + H2O = a phenol + sulfate + H(+). It carries out the reaction Hydrolysis of the 2-sulfate groups of the 2-O-sulfo-D-glucuronate residues of chondroitin sulfate, heparin and heparitin sulfate.. Functionally, catalyzes the hydrolysis of pseudosubstrates such as p-nitrocatechol sulfate and p-nitrophenyl sulfate. Catalyzes the hydrolysis of the 2-sulfate groups of the 2-O-sulfo-D-glucuronate residues of chondroitin sulfate, heparin and heparitin sulfate. Acts selectively on 2-sulfoglucuronate and lacks activity against 2-sulfoiduronate. This chain is Arylsulfatase K (Arsk), found in Rattus norvegicus (Rat).